Here is a 165-residue protein sequence, read N- to C-terminus: Small ribosomal subunit protein uS5 (165 aa).

Positions 10–73 constitute an S5 DRBM domain; it reads QIEKLISLNR…TSARKNLRFV (64 aa).

The protein belongs to the universal ribosomal protein uS5 family. In terms of assembly, part of the 30S ribosomal subunit. Contacts proteins S4 and S8.

With S4 and S12 plays an important role in translational accuracy. Functionally, located at the back of the 30S subunit body where it stabilizes the conformation of the head with respect to the body. The sequence is that of Small ribosomal subunit protein uS5 from Borreliella burgdorferi (strain ATCC 35210 / DSM 4680 / CIP 102532 / B31) (Borrelia burgdorferi).